We begin with the raw amino-acid sequence, 170 residues long: Bacilliredoxin SRU_1493 (170 aa).

The interval 140-170 (CGDEEPPADAPSRPDPSSSGEGLPSTFQSIT) is disordered.

The protein belongs to the bacilliredoxin family.

The polypeptide is Bacilliredoxin SRU_1493 (Salinibacter ruber (strain DSM 13855 / M31)).